Consider the following 90-residue polypeptide: Large ribosomal subunit protein bL27 (90 aa).

Residues 1-22 (MAHKKAGGSTRNGRDSNPKMLG) are disordered.

It belongs to the bacterial ribosomal protein bL27 family.

This Coxiella burnetii (strain CbuK_Q154) (Coxiella burnetii (strain Q154)) protein is Large ribosomal subunit protein bL27.